We begin with the raw amino-acid sequence, 151 residues long: Globin CTT-VIII (151 aa).

In terms of domain architecture, Globin spans 4-148 (PMSADQLALF…MFFYILHALE (145 aa)). Positions 62 and 97 each coordinate heme b.

It belongs to the globin family. In terms of assembly, homodimer.

The sequence is that of Globin CTT-VIII (CTT-8) from Chironomus thummi thummi (Midge).